The primary structure comprises 242 residues: Uridylate kinase (242 aa).

15–18 (KLSG) serves as a coordination point for ATP. Residue glycine 57 coordinates UMP. Glycine 58 and arginine 62 together coordinate ATP. Residues aspartate 78 and 139–146 (TGNPFFTT) contribute to the UMP site. The ATP site is built by threonine 166, tyrosine 172, and aspartate 175.

This sequence belongs to the UMP kinase family. Homohexamer.

It localises to the cytoplasm. It carries out the reaction UMP + ATP = UDP + ADP. Its pathway is pyrimidine metabolism; CTP biosynthesis via de novo pathway; UDP from UMP (UMPK route): step 1/1. Its activity is regulated as follows. Inhibited by UTP. In terms of biological role, catalyzes the reversible phosphorylation of UMP to UDP. In Acinetobacter baylyi (strain ATCC 33305 / BD413 / ADP1), this protein is Uridylate kinase.